A 603-amino-acid chain; its full sequence is Dual specificity protein phosphatase CDC14A (603 aa).

An a region spans residues E7–E162. The segment at T163–E176 is linker. Residues N177 to K343 are b. The Tyrosine-protein phosphatase domain occupies D179 to D336. Catalysis depends on C278, which acts as the Phosphocysteine intermediate. At S484 the chain carries Phosphoserine. Polar residues predominate over residues N518 to R538. The disordered stretch occupies residues N518–S583. Composition is skewed to low complexity over residues S539 to S558 and L573 to S583. S592 carries the post-translational modification Phosphoserine.

It belongs to the protein-tyrosine phosphatase family. Non-receptor class CDC14 subfamily. As to quaternary structure, interacts with KIF20A. Interaction is required to localize CDC14 to the midzone of the mitotic spindle. As to expression, expressed in the inner ear.

It is found in the nucleus. The protein resides in the cytoplasm. The protein localises to the cytoskeleton. It localises to the microtubule organizing center. Its subcellular location is the centrosome. It is found in the spindle. The protein resides in the cell projection. The protein localises to the kinocilium. It localises to the spindle pole. Its subcellular location is the stereocilium. The enzyme catalyses O-phospho-L-tyrosyl-[protein] + H2O = L-tyrosyl-[protein] + phosphate. It catalyses the reaction O-phospho-L-seryl-[protein] + H2O = L-seryl-[protein] + phosphate. The catalysed reaction is O-phospho-L-threonyl-[protein] + H2O = L-threonyl-[protein] + phosphate. Functionally, dual-specificity phosphatase. Required for centrosome separation and productive cytokinesis during cell division. Dephosphorylates SIRT2 around early anaphase. May dephosphorylate the APC subunit FZR1/CDH1, thereby promoting APC-FZR1 dependent degradation of mitotic cyclins and subsequent exit from mitosis. Required for normal hearing. The chain is Dual specificity protein phosphatase CDC14A (Cdc14a) from Mus musculus (Mouse).